We begin with the raw amino-acid sequence, 232 residues long: Lipoprotein-releasing system ATP-binding protein LolD (232 aa).

The region spanning 11–231 (VYLHDIKRQY…SIEDGVIVEL (221 aa)) is the ABC transporter domain. 47–54 (APSGSGKS) lines the ATP pocket.

Belongs to the ABC transporter superfamily. Lipoprotein translocase (TC 3.A.1.125) family. As to quaternary structure, the complex is composed of two ATP-binding proteins (LolD) and two transmembrane proteins (LolC and LolE).

The protein localises to the cell inner membrane. In terms of biological role, part of the ABC transporter complex LolCDE involved in the translocation of mature outer membrane-directed lipoproteins, from the inner membrane to the periplasmic chaperone, LolA. Responsible for the formation of the LolA-lipoprotein complex in an ATP-dependent manner. The polypeptide is Lipoprotein-releasing system ATP-binding protein LolD (Rhodopseudomonas palustris (strain BisB5)).